Consider the following 418-residue polypeptide: Sprouty-related, EVH1 domain-containing protein 2 (418 aa).

Positions 5 to 122 constitute a WH1 domain; the sequence is THPDDDSYIV…RGVRKAIEDL (118 aa). The interval 127–171 is disordered; sequence TTSSSTIHNEAELGDDDVFTTATDSSSNSSQKREQPTRTISSPTS. Positions 146–156 are enriched in polar residues; the sequence is TTATDSSSNSS. One can recognise a KBD domain in the interval 201 to 257; it reads PYRQVSFPDDDEEIVRINPREKIWMTGYEDYRHAPVRGKYPDPSEDADSSYVRFAKG. Ser-206 bears the Phosphoserine mark. Phosphotyrosine is present on residues Tyr-228 and Tyr-231. A disordered region spans residues 275 to 302; the sequence is GLGEDPKGRGGSVIKTQPSRGKSRRRKE. The SPR domain maps to 308–416; that stretch reads RCVYCRDMFN…CRCCGGKHKA (109 aa).

As to quaternary structure, homodimer and heterodimer. Able to interact with SPRED1 to form heterodimers. Interacts with RAS. May interact with ZDHHC13 (via ANK repeats) and ZDHHC17 (via ANK repeats). Interacts with TESK1. Interacts with NF1. Phosphorylated on serine and threonine residues. Phosphorylated on tyrosine. Phosphorylation of Tyr-228 and Tyr-231 are required for ubiquitination. In terms of processing, ubiquitinated; leading to degradation by the proteasome. Expressed in liver, skin, small intestine, salivary gland and prostate.

It localises to the cell membrane. Its subcellular location is the cytoplasmic vesicle. The protein localises to the secretory vesicle membrane. The protein resides in the cytoplasm. Its function is as follows. Negatively regulates Ras signaling pathways and downstream activation of MAP kinases. Recruits and translocates NF1 to the cell membrane, thereby enabling NF1-dependent hydrolysis of active GTP-bound Ras to inactive GDP-bound Ras. Inhibits fibroblast growth factor (FGF)-induced retinal lens fiber differentiation, probably by inhibiting FGF-mediated phosphorylation of ERK1/2. Inhibits TGFB-induced epithelial-to-mesenchymal transition in lens epithelial cells. The chain is Sprouty-related, EVH1 domain-containing protein 2 (SPRED2) from Homo sapiens (Human).